Reading from the N-terminus, the 402-residue chain is Acetylornithine aminotransferase (402 aa).

Residues 106–107 and phenylalanine 132 contribute to the pyridoxal 5'-phosphate site; that span reads GA. Residue arginine 135 coordinates N(2)-acetyl-L-ornithine. Residue 217 to 220 coordinates pyridoxal 5'-phosphate; it reads DEVQ. Lysine 247 is modified (N6-(pyridoxal phosphate)lysine). A N(2)-acetyl-L-ornithine-binding site is contributed by threonine 275. Threonine 276 lines the pyridoxal 5'-phosphate pocket.

Belongs to the class-III pyridoxal-phosphate-dependent aminotransferase family. ArgD subfamily. In terms of assembly, homodimer. Requires pyridoxal 5'-phosphate as cofactor.

The protein localises to the cytoplasm. The enzyme catalyses N(2)-acetyl-L-ornithine + 2-oxoglutarate = N-acetyl-L-glutamate 5-semialdehyde + L-glutamate. The protein operates within amino-acid biosynthesis; L-arginine biosynthesis; N(2)-acetyl-L-ornithine from L-glutamate: step 4/4. The protein is Acetylornithine aminotransferase of Streptomyces coelicolor (strain ATCC BAA-471 / A3(2) / M145).